The primary structure comprises 310 residues: MSSELSVDHLLGIKYLKPEDIELIFKTADHFKEVINRPIKKVPSLRDITIANLFFENSTRTRLSFELAEKRLSADVINFSAASSSVKKGETLIDTVNNILSMKVDMVVMRHPNPGAGIFLSKHVDASIINAGDGAHEHPTQALLDSYSIREKLGDVRGKKVVIVGDILHSRVALSNIFALKLQGAEVKVCGPKTLLPKHIESLGVGVEMNLKTALEWCDVANMLRVQNERMDISYFPSTREYVKQFGLNKKLLDSLKKEIVIMHPGPINRGVEITSDVADSEHAIILDQVQNGVAVRMAVIYLLASKIKQ.

Positions 60 and 61 each coordinate carbamoyl phosphate. L-aspartate is bound at residue K88. Residues R110, H138, and Q141 each contribute to the carbamoyl phosphate site. Residues R171 and R225 each coordinate L-aspartate. G266 and P267 together coordinate carbamoyl phosphate.

The protein belongs to the aspartate/ornithine carbamoyltransferase superfamily. ATCase family. Heterododecamer (2C3:3R2) of six catalytic PyrB chains organized as two trimers (C3), and six regulatory PyrI chains organized as three dimers (R2).

The catalysed reaction is carbamoyl phosphate + L-aspartate = N-carbamoyl-L-aspartate + phosphate + H(+). It functions in the pathway pyrimidine metabolism; UMP biosynthesis via de novo pathway; (S)-dihydroorotate from bicarbonate: step 2/3. Catalyzes the condensation of carbamoyl phosphate and aspartate to form carbamoyl aspartate and inorganic phosphate, the committed step in the de novo pyrimidine nucleotide biosynthesis pathway. In Christiangramia forsetii (strain DSM 17595 / CGMCC 1.15422 / KT0803) (Gramella forsetii), this protein is Aspartate carbamoyltransferase catalytic subunit.